We begin with the raw amino-acid sequence, 79 residues long: Cytochrome b (79 aa).

A run of 3 helical transmembrane segments spans residues serine 1–methionine 7, tryptophan 31–isoleucine 52, and tryptophan 67–alanine 79. The heme b site is built by histidine 37 and histidine 51.

This sequence belongs to the cytochrome b family. In terms of assembly, the cytochrome bc1 complex contains 11 subunits: 3 respiratory subunits (MT-CYB, CYC1 and UQCRFS1), 2 core proteins (UQCRC1 and UQCRC2) and 6 low-molecular weight proteins (UQCRH/QCR6, UQCRB/QCR7, UQCRQ/QCR8, UQCR10/QCR9, UQCR11/QCR10 and a cleavage product of UQCRFS1). This cytochrome bc1 complex then forms a dimer. Heme b serves as cofactor.

The protein localises to the mitochondrion inner membrane. Its function is as follows. Component of the ubiquinol-cytochrome c reductase complex (complex III or cytochrome b-c1 complex) that is part of the mitochondrial respiratory chain. The b-c1 complex mediates electron transfer from ubiquinol to cytochrome c. Contributes to the generation of a proton gradient across the mitochondrial membrane that is then used for ATP synthesis. In Dipodomys heermanni (Heermann's kangaroo rat), this protein is Cytochrome b (MT-CYB).